Reading from the N-terminus, the 252-residue chain is Chaplin-A (252 aa).

The signal sequence occupies residues 1–20; it reads MVAAAAATGILSLCGSPALA. The Chaplin 1 domain maps to 31 to 71; that stretch reads SPGAVSGNALQVPVDVPVNACGNTVDVIAALNPAFGNECEN. Disordered regions lie at residues 71–121 and 150–224; these read NASD…GNNA and CEND…GSEG. A compositionally biased stretch (low complexity) spans 86-108; sequence EDASSSSSSSTSASSSGSHADGA. Residues 112 to 152 enclose the Chaplin 2 domain; sequence SPGVGSGNNAQVPVDVPVNLCGNTVDVIAALNPVFGNKCEN. Over residues 153 to 165 the composition is skewed to acidic residues; the sequence is DAEEPPGYGEEEP. A compositionally biased stretch (low complexity) spans 210–224; it reads QTEQPPALAETGSEG. Positions 217–221 match the LPXTG sorting signal motif; sequence LAETG. 2 propeptides (removed by sortase) span residues 219–252 and 221–252; these read ETGS…LSGR and GSEG…LSGR. Thr-220 is subject to Pentaglycyl murein peptidoglycan amidated threonine.

The protein belongs to the chaplin family. Long chaplin subfamily.

It is found in the secreted. The protein localises to the cell wall. Its function is as follows. One of 8 partially redundant surface-active proteins required for efficient formation of aerial mycelium; the short chaplins assemble into a hydrophobic, amyloidal fibrillar surface layer that envelopes and protects aerial hyphae and spores, presumably anchored to the long chaplins. Chaplins have an overlapping function with the surface-active SapB peptide; chaplins are essential on minimal medium while on rich medium both chaplins and SapB are required for efficient aerial hyphae formation. A minimal chaplin strain capable of forming aerial mycelium/hyphae on minimal medium contains ChpC, ChpE and ChpH. The strain also has restored rodlet formation on the hyphae surface. A second minimal chaplin strain with ChpA, ChpD and ChpE makes slightly less robust hyphae. The long chaplins (ChpA, ChpB, ChpC) are not absolutely necessary for short chaplin localization or rodlet formation, but probably play a role in initiating aerial hyphae development. Chaplins are also involved in cell attachment to a hydrophobic surface. This chain is Chaplin-A, found in Streptomyces coelicolor (strain ATCC BAA-471 / A3(2) / M145).